The chain runs to 1401 residues: MKDLLKFLKAQHKTEEFDAIKIGLASPDQIRSWSFGEVKKPETINYRTFKPERDGLFCARIFGPVKDYECLCGKYKRLKHRGVICEKCGVEVTQTKVRRDRMGHIELASPVAHIWFLKSLPSRIGLLMDIPLRDIERVLYFESYVVTEPGMTDLERSQLLSEEEYLDKLEEFGDEFTAKMGAEAIKDLLASMDMQAEIEDMREELETTNSETKRKKVTKRLKLVEAFVQSGNNPEWMILTVLPVLPPDLRPLVPLDGGRFATSDLNDLYRRVINRNNRLKRLLDLAAPDIIVRNEKRMLQESVDALLDNGRRGRAITGSNKRPLKSLADMIKGKQGRFRQNLLGKRVDYSGRSVITVGPYLRLHQCGLPKKMALELFKPFIYSKLEGRGLATTIKAAKKMVEREEAIVWDILDDVIREHPVLLNRAPTLHRLGIQAFEPVLIEGKAIQLHPLVCAAYNADFDGDQMAVHVPLTLEAQLEARTLMMSTNNILSPASGDPIIVPSQDVVLGLYYMTREKINAKGEGMYLEGFAEAEKAYRTGVAELHARVKVRITEVLRDENGIETRETKLVDTTVGRAMLWQIVPEGLPYSIINQKLGKKQISNLLNEAYRTLGLKDTVVFADQIMYTGFAYAALSGASVGIDDMVIPDAKYTKVADAEEEVKQIQEQYQSGLVTAGERYNKVIDIWAATNEQVAKEMMDNLSSETVLNRDGEEEQQESFNSVYMMADSGARGSAAQIRQLAGMRGLMAKPDGSIIETPITANFREGLNVNQYFISTHGARKGLADTALKTANSGYLTRRLVDVAQDVVVHLDDCGTYEGVTMTPLIEGGDVKEPLHERVLGRVVAEDVLKPGTDEILLPRNTLLDEKQCQIVEENSVDQIKVRSVVSCEADFGCCANCYGRDLARGHMVNQGESVGVIAAQSIGEPGTQLTMRTFHIGGAASTAAADNSIQVKTTGSIKLHNAKHVTNGEGNLVITSRASELTVIDEHGRTKESYKLSYGTILTKKDGDAVNQGDKIASWDPHTMPIITEVQGQVQFVDMIDGVTITTQTDELTGLSSIVVLDAAERASAGKDMRPTVKLVDANGNDIMIPGTEMPAQYFLPGKAIVNLADGGNVGIGETLARIPQASSGTKDITGGLPRVADLFEARKPKEPAILAEHAGIVAFGKETKGKVRLLITRDDNGEVYEEMIHKHRQLNIFEGDKVERGDVISDGPETPHDILRLRGIHAVTEYITNEVQEVYRLQGVKINDKHIETIVRQMLRKCTITHSGDSTFLEGEQLEFANVTIANRQLEAEGKQPARFERDLLGITKASLATESFISAASFQETTRVLTEAAVSGKRDELRGLKENVIVGRLIPAGTGFAYHQERQKQKAVEQEGPSAEQATDNLAALLNAGFSSEE.

Residues Cys-70, Cys-72, Cys-85, and Cys-88 each contribute to the Zn(2+) site. Asp-460, Asp-462, and Asp-464 together coordinate Mg(2+). Residues Cys-814, Cys-888, Cys-895, and Cys-898 each contribute to the Zn(2+) site. The tract at residues Arg-1369–Asn-1388 is disordered.

The protein belongs to the RNA polymerase beta' chain family. The RNAP catalytic core consists of 2 alpha, 1 beta, 1 beta' and 1 omega subunit. When a sigma factor is associated with the core the holoenzyme is formed, which can initiate transcription. Requires Mg(2+) as cofactor. Zn(2+) is required as a cofactor.

It catalyses the reaction RNA(n) + a ribonucleoside 5'-triphosphate = RNA(n+1) + diphosphate. Its function is as follows. DNA-dependent RNA polymerase catalyzes the transcription of DNA into RNA using the four ribonucleoside triphosphates as substrates. This chain is DNA-directed RNA polymerase subunit beta', found in Aliivibrio fischeri (strain ATCC 700601 / ES114) (Vibrio fischeri).